The primary structure comprises 180 residues: Large ribosomal subunit protein uL18m (180 aa).

Belongs to the universal ribosomal protein uL18 family. Component of the mitochondrial large ribosomal subunit (mt-LSU). Mature mammalian 55S mitochondrial ribosomes consist of a small (28S) and a large (39S) subunit. The 28S small subunit contains a 12S ribosomal RNA (12S mt-rRNA) and 30 different proteins. The 39S large subunit contains a 16S rRNA (16S mt-rRNA), a copy of mitochondrial valine transfer RNA (mt-tRNA(Val)), which plays an integral structural role, and 52 different proteins.

Its subcellular location is the mitochondrion. Functionally, together with thiosulfate sulfurtransferase (TST), acts as a mitochondrial import factor for the cytosolic 5S rRNA. The precursor form shows RNA chaperone activity; is able to fold the 5S rRNA into an import-competent conformation that is recognized by rhodanese (TST). Both the cytoplasmic and mitochondrial forms are able to bind to the helix IV-loop D in the gamma domain of the 5S rRNA. The polypeptide is Large ribosomal subunit protein uL18m (MRPL18) (Homo sapiens (Human)).